Consider the following 246-residue polypeptide: MKYDIIGDIHGCFQEFQDLTKKLGYNWNSDLPIHPDQRKLAFVGDITDRGPHSLRMIEIVWELVINKKVAYYAPGNHCNKLYRFFLGRNVTIAHGLETTVAEYEALPSHQQNMIKEKFITLYEQSPLYHVLDEKRLIVCHAGIRQDYIGRKDKKVQTFVLYGDITGEKHADGSPVRRDWAKEYKGTSWIVYGHTPVKEPRFVNHTVNIDTGAVFGGKLTGLRYPEMEIVSVPSSLPFVPEKFRPIS.

Belongs to the PrpE family. Requires Ni(2+) as cofactor.

The catalysed reaction is P(1),P(4)-bis(5'-guanosyl) tetraphosphate + H2O = GMP + GTP + 2 H(+). Functionally, asymmetrically hydrolyzes Ap4p to yield AMP and ATP. In Bacillus cereus (strain Q1), this protein is Bis(5'-nucleosyl)-tetraphosphatase PrpE [asymmetrical].